Here is a 401-residue protein sequence, read N- to C-terminus: cAMP-dependent protein kinase type II-alpha regulatory subunit (401 aa).

An N-acetylserine modification is found at S2. The tract at residues 2–135 (SHIQIPPGLT…RLQEACKDIL (134 aa)) is dimerization and phosphorylation. A phosphoserine mark is found at S47, S74, S76, and S96. Residues 61–83 (ESSAVPVIEEDGESDSDSEDADL) are disordered. Residues 68 to 83 (IEEDGESDSDSEDADL) are compositionally biased toward acidic residues. 3',5'-cyclic AMP is bound by residues 136–257 (LFKN…ESVP), E205, R214, 258–401 (LFKS…DPGQ), E335, and R344. T212 bears the Phosphothreonine; by PDPK1 mark. Residues S347 and S392 each carry the phosphoserine modification.

Belongs to the cAMP-dependent kinase regulatory chain family. As to quaternary structure, the inactive form of the enzyme is composed of two regulatory chains and two catalytic chains. Activation by cAMP produces two active catalytic monomers and a regulatory dimer that binds four cAMP molecules. Interacts with AKAP4. Interacts with CBFA2T3. Interacts with the phosphorylated form of PJA2. Interacts with MYRIP. This interaction may link PKA to components of the exocytosis machinery, thus facilitating exocytosis, including insulin release. Forms a complex composed of PRKAR2A, GSK3B and GSKIP through GSKIP interaction; facilitates PKA-induced phosphorylation and regulates GSK3B activity. Interacts with ADCY8; inhibits adenylate cyclase activity through PKA phosphorylation. Post-translationally, phosphorylated by the activated catalytic chain. As to expression, four types of regulatory chains are found: I-alpha, I-beta, II-alpha, and II-beta. Their expression varies among tissues and is in some cases constitutive and in others inducible.

The protein localises to the cytoplasm. It is found in the cell membrane. Regulatory subunit of the cAMP-dependent protein kinases involved in cAMP signaling in cells. Type II regulatory chains mediate membrane association by binding to anchoring proteins, including the MAP2 kinase. This Mus musculus (Mouse) protein is cAMP-dependent protein kinase type II-alpha regulatory subunit (Prkar2a).